A 532-amino-acid chain; its full sequence is Pyruvate kinase (532 aa).

Residue arginine 63 coordinates substrate. Residues asparagine 65, serine 67, aspartate 99, and threonine 100 each coordinate K(+). An ATP-binding site is contributed by 65–68 (NFSH). Positions 106 and 191 each coordinate ATP. Glutamate 256 provides a ligand contact to Mg(2+). The substrate site is built by glycine 279, aspartate 280, and threonine 312. Residue aspartate 280 participates in Mg(2+) binding.

Belongs to the pyruvate kinase family. As to quaternary structure, homotetramer. Mg(2+) serves as cofactor. It depends on K(+) as a cofactor.

It catalyses the reaction pyruvate + ATP = phosphoenolpyruvate + ADP + H(+). It participates in carbohydrate degradation; glycolysis; pyruvate from D-glyceraldehyde 3-phosphate: step 5/5. In Agaricus bisporus (White button mushroom), this protein is Pyruvate kinase (pkiA).